A 307-amino-acid polypeptide reads, in one-letter code: MATITAGMVKELRETTGVGMMDCKQALSENDGNMEAAIDWLRKKGLSKAAKKAGRVAAEGLIGALTDGKKGVVVEVNSETDFVARNEQFQGLVKMIAQVALKVGDDIDAINAAPVGSVTVATAIADAIATIGENMTLRRAKLLSVENGVVASYVHGAVVEGAGKLGVLVALESTGKTDELALLGRQIAMHVAAANPQALDAASLDPELIRREKDVMADKYRQQGKPEAMIEKIVENGLKTFYKEVCLLEQAFIHDTGKSVAQAVKEAEGKVGAPIKVAAFVRYALGEGIEKQTSDFAAEVAAVSGQK.

The tract at residues 80-83 (TDFV) is involved in Mg(2+) ion dislocation from EF-Tu.

This sequence belongs to the EF-Ts family.

It localises to the cytoplasm. In terms of biological role, associates with the EF-Tu.GDP complex and induces the exchange of GDP to GTP. It remains bound to the aminoacyl-tRNA.EF-Tu.GTP complex up to the GTP hydrolysis stage on the ribosome. In Rhodopseudomonas palustris (strain BisA53), this protein is Elongation factor Ts.